The chain runs to 395 residues: Protein NDRG1 (395 aa).

The disordered stretch occupies residues 325-395 (RSRTGSAASS…NTPKSMEISC (71 aa)). Residues 326-339 (SRTGSAASSSSQDG) are compositionally biased toward low complexity. A run of 4 repeats spans residues 339 to 348 (GNRSRSHTNE), 349 to 358 (GSRSRSHTGD), 359 to 368 (GNRSRAHTGD), and 369 to 378 (GNRSRSHTDS). The 4 X 10 AA tandem repeats of G-[NS]-R-S-R-[AS]-H-T-[DGN]-[DES] stretch occupies residues 339 to 378 (GNRSRSHTNEGSRSRSHTGDGNRSRAHTGDGNRSRSHTDS). Residues 345–376 (HTNEGSRSRSHTGDGNRSRAHTGDGNRSRSHT) show a composition bias toward basic and acidic residues. The span at 377 to 389 (DSNNTNSEHNTPK) shows a compositional bias: polar residues.

Belongs to the NDRG family.

May be involved in pronephros development, after specification of the pronephros. The polypeptide is Protein NDRG1 (Xenopus tropicalis (Western clawed frog)).